A 187-amino-acid polypeptide reads, in one-letter code: Elongation factor P (187 aa).

Belongs to the elongation factor P family.

Its subcellular location is the cytoplasm. It participates in protein biosynthesis; polypeptide chain elongation. Involved in peptide bond synthesis. Stimulates efficient translation and peptide-bond synthesis on native or reconstituted 70S ribosomes in vitro. Probably functions indirectly by altering the affinity of the ribosome for aminoacyl-tRNA, thus increasing their reactivity as acceptors for peptidyl transferase. This chain is Elongation factor P, found in Clavibacter michiganensis subsp. michiganensis (strain NCPPB 382).